The following is a 490-amino-acid chain: ATP synthase subunit beta, chloroplastic (490 aa).

An ATP-binding site is contributed by 170 to 177; the sequence is GGAGVGKT.

The protein belongs to the ATPase alpha/beta chains family. In terms of assembly, F-type ATPases have 2 components, CF(1) - the catalytic core - and CF(0) - the membrane proton channel. CF(1) has five subunits: alpha(3), beta(3), gamma(1), delta(1), epsilon(1). CF(0) has four main subunits: a(1), b(1), b'(1) and c(9-12).

It localises to the plastid. The protein resides in the chloroplast thylakoid membrane. It catalyses the reaction ATP + H2O + 4 H(+)(in) = ADP + phosphate + 5 H(+)(out). Produces ATP from ADP in the presence of a proton gradient across the membrane. The catalytic sites are hosted primarily by the beta subunits. This is ATP synthase subunit beta, chloroplastic from Ipomoea setosa (Brazilian morning glory).